Reading from the N-terminus, the 1241-residue chain is MRAVLTWRDKAEHCINDIAFKPDGTQLILAAGSRLLVYDTSDGTLLQPLKGHKDTVYCVAYAKDGKRFASGSADKSVIIWTSKLEGILKYTHNDAIQCVSYNPITHQLASCSSSDFGLWSPEQKSVSKHKSSSKIICCSWTNDGQYLALGMFNGIISIRNKNGEEKVKIERPGGSLSPIWSICWNPSSRWESFWMNRENEDAEDVIVNRYIQEIPSTLKSAVYSSQGSEAEEEEPEEEDDSPRDDNLEERNDILAVADWGQKVSFYQLSGKQIGKDRALNFDPCCISYFTKGEYILLGGSDKQVSLFTKDGVRLGTVGEQNSWVWTCQAKPDSNYVVVGCQDGTISFYQLIFSTVHGLYKDRYAYRDSMTDVIVQHLITEQKVRIKCKELVKKIAIYRNRLAIQLPEKILIYELYSEDLSDMHYRVKEKIIKKFECNLLVVCANHIILCQEKRLQCLSFSGVKEREWQMESLIRYIKVIGGPPGREGLLVGLKNGQILKIFVDNLFAIVLLKQATAVRCLDMSASRKKLAVVDENDTCLVYDIDTKELLFQEPNANSVAWNTQCEDMLCFSGGGYLNIKASTFPVHRQKLQGFVVGYNGSKIFCLHVFSISAVEVPQSAPMYQYLDRKLFKEAYQIACLGVTDTDWRELAMEALEGLDFETAKKAFIRVQDLRYLELISSIEERKKRGETNNDLFLADVFSYQGKFHEAAKLYKRSGHENLALEMYTDLCMFEYAKDFLGSGDPKETKMLITKQADWARNIKEPKAAVEMYISAGEHVKAIEICGDHGWVDMLIDIARKLDKAEREPLLLCATYLKKLDSPGYAAETYLKMGDLKSLVQLHVETQRWDEAFALGEKHPEFKDDIYMPYAQWLAENDRFEEAQKAFHKAGRQREAVQVLEQLTNNAVAESRFNDAAYYYWMLSMQCLDIAQDPAQKDTMLGKFYHFQRLAELYHGYHAIHRHTEDPFSVHRPETLFNISRFLLHSLPKDTPSGISKVKILFTLAKQSKALGAYRLARHAYDKLRGLYIPARFQKSIELGTLTIRAKPFHDSEELVPLCYRCSTNNPLLNNLGNVCINCRQPFIFSASSYDVLHLVEFYLEEGITDEEAISLIDLEVLRPKRDDRQLEIANNSSQILRLVETKDSIGDEDPFTAKLSFEQGGSEFVPVVVSRLVLRSMSRRDVLIKRWPPPLRWQYFRSLLPDASITMCPSCFQMFHSEDYELLVLQHGCCPYCRRCKDDPGP.

WD repeat units follow at residues 10–50 (KAEH…QPLK), 51–91 (GHKD…LKYT), 93–129 (NDAI…VSKH), and 131–169 (SSSK…KVKI). Positions 222–246 (VYSSQGSEAEEEEPEEEDDSPRDDN) are disordered. Acidic residues predominate over residues 229–242 (EAEEEEPEEEDDSP). WD repeat units lie at residues 278 to 317 (ALNF…LGTV), 319 to 359 (EQNS…HGLY), and 512 to 551 (KQAT…LLFQ).

In terms of assembly, component of the IFT complex A (IFT-A) complex. IFT-A complex is divided into a core subcomplex composed of IFT122:IFT140:WDR19 which is associated with TULP3 and a peripheral subcomplex composed of IFT43:WDR35:TTC21B. Interacts with IFT43:WDR35; the interaction connects the 2 IFT-A subcomplexes. Interacts with IFTAP; the interaction associates IFTAP with IFT-A complex. In terms of tissue distribution, expressed in many tissues. Predominant expression in testis and pituitary.

It localises to the cell projection. The protein resides in the cilium. Its subcellular location is the cytoplasm. The protein localises to the cytoskeleton. It is found in the cilium basal body. In terms of biological role, as a component of the IFT complex A (IFT-A), a complex required for retrograde ciliary transport and entry into cilia of G protein-coupled receptors (GPCRs), it is required in ciliogenesis and ciliary protein trafficking. Involved in cilia formation during neuronal patterning. Acts as a negative regulator of Shh signaling. Required to recruit TULP3 to primary cilia. The chain is Intraflagellar transport protein 122 homolog from Homo sapiens (Human).